A 177-amino-acid chain; its full sequence is Small ribosomal subunit protein uS4 (177 aa).

An S4 RNA-binding domain is found at R104–E168. The tract at residues P157–E177 is disordered. Residues S165 to E177 show a composition bias toward basic and acidic residues.

It belongs to the universal ribosomal protein uS4 family. Part of the 30S ribosomal subunit. Contacts protein S5. The interaction surface between S4 and S5 is involved in control of translational fidelity.

Functionally, one of the primary rRNA binding proteins, it binds directly to 16S rRNA where it nucleates assembly of the body of the 30S subunit. With S5 and S12 plays an important role in translational accuracy. In Methanococcus aeolicus (strain ATCC BAA-1280 / DSM 17508 / OCM 812 / Nankai-3), this protein is Small ribosomal subunit protein uS4.